The sequence spans 365 residues: tRNA(Met) cytidine acetate ligase (365 aa).

ATP contacts are provided by residues 7-20, G96, N152, and R175; that span reads IAEFNPFHNGHKYL.

It belongs to the TmcAL family.

Its subcellular location is the cytoplasm. The enzyme catalyses cytidine(34) in elongator tRNA(Met) + acetate + ATP = N(4)-acetylcytidine(34) in elongator tRNA(Met) + AMP + diphosphate. Catalyzes the formation of N(4)-acetylcytidine (ac(4)C) at the wobble position of elongator tRNA(Met), using acetate and ATP as substrates. First activates an acetate ion to form acetyladenylate (Ac-AMP) and then transfers the acetyl group to tRNA to form ac(4)C34. This is tRNA(Met) cytidine acetate ligase from Streptococcus pneumoniae serotype 19F (strain G54).